The primary structure comprises 314 residues: Methionyl-tRNA formyltransferase (314 aa).

Residue 110-113 (SLLP) coordinates (6S)-5,6,7,8-tetrahydrofolate.

The protein belongs to the Fmt family.

The catalysed reaction is L-methionyl-tRNA(fMet) + (6R)-10-formyltetrahydrofolate = N-formyl-L-methionyl-tRNA(fMet) + (6S)-5,6,7,8-tetrahydrofolate + H(+). Attaches a formyl group to the free amino group of methionyl-tRNA(fMet). The formyl group appears to play a dual role in the initiator identity of N-formylmethionyl-tRNA by promoting its recognition by IF2 and preventing the misappropriation of this tRNA by the elongation apparatus. This Bacillus cereus (strain AH187) protein is Methionyl-tRNA formyltransferase.